We begin with the raw amino-acid sequence, 228 residues long: Ribonuclease 3 (228 aa).

One can recognise an RNase III domain in the interval 7 to 136; that stretch reads LNKLKNEYNI…FNGALFLDQG (130 aa). Residue glutamate 49 participates in Mg(2+) binding. Aspartate 53 is a catalytic residue. Mg(2+) is bound by residues aspartate 122 and glutamate 125. The active site involves glutamate 125. Positions 162–228 constitute a DRBM domain; sequence DYKTDLQELL…AAKAALQKFE (67 aa). The interval 207–228 is disordered; the sequence is GEGHNKKAAEQQAAKAALQKFE. Over residues 216–228 the composition is skewed to low complexity; that stretch reads EQQAAKAALQKFE.

The protein belongs to the ribonuclease III family. In terms of assembly, homodimer. It depends on Mg(2+) as a cofactor.

It localises to the cytoplasm. It catalyses the reaction Endonucleolytic cleavage to 5'-phosphomonoester.. In terms of biological role, digests double-stranded RNA. Involved in the processing of primary rRNA transcript to yield the immediate precursors to the large and small rRNAs (23S and 16S). Processes some mRNAs, and tRNAs when they are encoded in the rRNA operon. Processes pre-crRNA and tracrRNA of type II CRISPR loci if present in the organism. The sequence is that of Ribonuclease 3 from Lactobacillus acidophilus (strain ATCC 700396 / NCK56 / N2 / NCFM).